The chain runs to 258 residues: MNTPLRVGIVGCGVLANAMAGHLARQPRPVEIVGCLVRDPGRARGALPCHGSWEALLAQRPEVVVECAGQAALAQYAQAILAAGVDLVPASVGALADDALRGALLEAAAAAGARIRIPSGAMVGIDGLAAARHVGVAEVLYRGTMPPVALQRYVSGPLPERGLAFAGSAREAVARFPKNANLTGTIALAGIGFDRTRVEMLIDPDATANVHELLARGEFGDFHARVSGLRISESSPSSRIVAGSLAQAALGSGFLALS.

NAD(+) is bound by residues alanine 121 and asparagine 181. Histidine 211 is a catalytic residue.

The protein belongs to the L-aspartate dehydrogenase family.

The enzyme catalyses L-aspartate + NADP(+) + H2O = oxaloacetate + NH4(+) + NADPH + H(+). It carries out the reaction L-aspartate + NAD(+) + H2O = oxaloacetate + NH4(+) + NADH + H(+). It functions in the pathway cofactor biosynthesis; NAD(+) biosynthesis; iminoaspartate from L-aspartate (dehydrogenase route): step 1/1. Functionally, specifically catalyzes the NAD or NADP-dependent dehydrogenation of L-aspartate to iminoaspartate. This Bordetella parapertussis (strain 12822 / ATCC BAA-587 / NCTC 13253) protein is L-aspartate dehydrogenase 1.